We begin with the raw amino-acid sequence, 236 residues long: Purine nucleoside phosphorylase DeoD-type (236 aa).

His-5 provides a ligand contact to a purine D-ribonucleoside. Phosphate is bound by residues Gly-21, Arg-25, Arg-44, and 88 to 91 (RIGS). Residues 180–182 (EME) and 204–205 (SD) each bind a purine D-ribonucleoside. Asp-205 functions as the Proton donor in the catalytic mechanism.

Belongs to the PNP/UDP phosphorylase family. As to quaternary structure, homohexamer; trimer of homodimers.

It carries out the reaction a purine D-ribonucleoside + phosphate = a purine nucleobase + alpha-D-ribose 1-phosphate. It catalyses the reaction a purine 2'-deoxy-D-ribonucleoside + phosphate = a purine nucleobase + 2-deoxy-alpha-D-ribose 1-phosphate. Catalyzes the reversible phosphorolytic breakdown of the N-glycosidic bond in the beta-(deoxy)ribonucleoside molecules, with the formation of the corresponding free purine bases and pentose-1-phosphate. The protein is Purine nucleoside phosphorylase DeoD-type of Hahella chejuensis (strain KCTC 2396).